A 540-amino-acid chain; its full sequence is Methionine--tRNA ligase 1 (540 aa).

A 'HIGH' region motif is present at residues 10–20; it reads PYANGSLHLGH. Residues C141, C144, C153, and C156 each contribute to the Zn(2+) site. Positions 327–331 match the 'KMSKS' region motif; that stretch reads KISTS. T330 contributes to the ATP binding site.

It belongs to the class-I aminoacyl-tRNA synthetase family. MetG type 1 subfamily. In terms of assembly, monomer. Requires Zn(2+) as cofactor.

It localises to the cytoplasm. It catalyses the reaction tRNA(Met) + L-methionine + ATP = L-methionyl-tRNA(Met) + AMP + diphosphate. Functionally, is required not only for elongation of protein synthesis but also for the initiation of all mRNA translation through initiator tRNA(fMet) aminoacylation. In Alkaliphilus oremlandii (strain OhILAs) (Clostridium oremlandii (strain OhILAs)), this protein is Methionine--tRNA ligase 1.